An 82-amino-acid polypeptide reads, in one-letter code: RNA-binding protein BPUM_0095 (82 aa).

This sequence belongs to the eukaryotic ribosomal protein eL8 family.

This is RNA-binding protein BPUM_0095 from Bacillus pumilus (strain SAFR-032).